The primary structure comprises 444 residues: Enolase 2 (444 aa).

Substrate is bound by residues histidine 165 and glutamate 174. Glutamate 217 acts as the Proton donor in catalysis. Mg(2+)-binding residues include aspartate 252, glutamate 303, and aspartate 330. Substrate is bound by residues glutamate 303 and aspartate 330. The Proton acceptor role is filled by lysine 355. Substrate contacts are provided by residues 382–385 (SHRS) and lysine 406.

Belongs to the enolase family. Homodimer. Requires Mg(2+) as cofactor.

The protein localises to the cytoplasm. The enzyme catalyses (2R)-2-phosphoglycerate = phosphoenolpyruvate + H2O. The protein operates within carbohydrate degradation; glycolysis; pyruvate from D-glyceraldehyde 3-phosphate: step 4/5. The protein is Enolase 2 (ENO2) of Toxoplasma gondii.